The chain runs to 76 residues: ATP synthase subunit c (76 aa).

Helical transmembrane passes span 12 to 32 and 54 to 74; these read LGSIGYGLAAIGPGVGVGIIF and ILGFAFCEALALIGLVMPFVY.

Belongs to the ATPase C chain family. As to quaternary structure, F-type ATPases have 2 components, F(1) - the catalytic core - and F(0) - the membrane proton channel. F(1) has five subunits: alpha(3), beta(3), gamma(1), delta(1), epsilon(1). F(0) has three main subunits: a(1), b(2) and c(10-14). The alpha and beta chains form an alternating ring which encloses part of the gamma chain. F(1) is attached to F(0) by a central stalk formed by the gamma and epsilon chains, while a peripheral stalk is formed by the delta and b chains.

It localises to the cell membrane. Its function is as follows. F(1)F(0) ATP synthase produces ATP from ADP in the presence of a proton or sodium gradient. F-type ATPases consist of two structural domains, F(1) containing the extramembraneous catalytic core and F(0) containing the membrane proton channel, linked together by a central stalk and a peripheral stalk. During catalysis, ATP synthesis in the catalytic domain of F(1) is coupled via a rotary mechanism of the central stalk subunits to proton translocation. Functionally, key component of the F(0) channel; it plays a direct role in translocation across the membrane. A homomeric c-ring of between 10-14 subunits forms the central stalk rotor element with the F(1) delta and epsilon subunits. In Streptomyces coelicolor (strain ATCC BAA-471 / A3(2) / M145), this protein is ATP synthase subunit c.